A 456-amino-acid chain; its full sequence is Endoglucanase A (456 aa).

A signal peptide spans 1–30 (MSRIRRFLATALAAATAGVGAIVTAIASAG). A catalytic region spans residues 31–322 (PAHAYDSPFY…RAYELAMNAA (292 aa)). Residue Asp113 is part of the active site. Intrachain disulfides connect Cys114–Cys159 and Cys267–Cys302. Asp151 serves as the catalytic Proton donor. Positions 255-280 (SRNGNGPLGSEWCDPPGRATGTWSTT) are disordered. Asp300 acts as the Nucleophile in catalysis. The disordered stretch occupies residues 321–358 (AAPPTYSPSPTPSTPSPSPSQSDPGSPSPSPSQPPAGR). Positions 323-355 (PPTYSPSPTPSTPSPSPSQSDPGSPSPSPSQPP) are linker ('hinge') (Pro-Ser box). The span at 325 to 338 (TYSPSPTPSTPSPS) shows a compositional bias: pro residues. In terms of domain architecture, CBM2 spans 353–456 (QPPAGRACEA…LSSSITCSAS (104 aa)). Residues Cys360 and Cys453 are joined by a disulfide bond.

Belongs to the glycosyl hydrolase 6 (cellulase B) family.

It catalyses the reaction Endohydrolysis of (1-&gt;4)-beta-D-glucosidic linkages in cellulose, lichenin and cereal beta-D-glucans.. The polypeptide is Endoglucanase A (celA) (Thermobispora bispora (Microbispora bispora)).